Reading from the N-terminus, the 328-residue chain is Putative lipase LIH1 (328 aa).

S181 functions as the Nucleophile in the catalytic mechanism. Catalysis depends on charge relay system residues D253 and H315.

Belongs to the AB hydrolase superfamily. Lipase family.

It carries out the reaction a triacylglycerol + H2O = a diacylglycerol + a fatty acid + H(+). Functionally, lipases catalyze the hydrolysis of the ester bond of tri-, di- and monoglycerides of long-chain fatty acids into fatty acids and glycerol. This chain is Putative lipase LIH1, found in Saccharomyces cerevisiae (strain ATCC 204508 / S288c) (Baker's yeast).